Reading from the N-terminus, the 329-residue chain is Putative L-ascorbate peroxidase 6 (329 aa).

His123 (proton acceptor) is an active-site residue. His244 contributes to the heme b binding site.

This sequence belongs to the peroxidase family. Ascorbate peroxidase subfamily. Heme b is required as a cofactor.

The enzyme catalyses L-ascorbate + H2O2 = L-dehydroascorbate + 2 H2O. Its function is as follows. Plays a key role in hydrogen peroxide removal. This is Putative L-ascorbate peroxidase 6 (APX6) from Arabidopsis thaliana (Mouse-ear cress).